The sequence spans 85 residues: MEKLTVLILVAIVLLTIQVLGQSDRDKHPKRRPRQYATKRLSALMKGHRQCTGAGFECEETPECCPNLTCKCSGSPLCTRYRCKT.

The first 23 residues, 1 to 23 (MEKLTVLILVAIVLLTIQVLGQS), serve as a signal peptide directing secretion. Positions 24 to 49 (DRDKHPKRRPRQYATKRLSALMKGHR) are excised as a propeptide. Pyrrolidone carboxylic acid is present on Gln-50.

The protein belongs to the conotoxin O2 superfamily. In terms of processing, contains 4 disulfide bonds. In terms of tissue distribution, expressed by the venom duct.

Its subcellular location is the secreted. The chain is Conotoxin Mi15b from Conus miles (Soldier cone).